A 142-amino-acid polypeptide reads, in one-letter code: Small ribosomal subunit protein bS18c (142 aa).

Residues 1–21 (MDRITGPFRKSKKSFRKPLPP) form a disordered region.

This sequence belongs to the bacterial ribosomal protein bS18 family. Part of the 30S ribosomal subunit.

The protein resides in the plastid. In Cuscuta gronovii (Common dodder), this protein is Small ribosomal subunit protein bS18c.